The primary structure comprises 465 residues: Siroheme synthase (465 aa).

Residues 1–203 (MDFLPLFHSL…GRPAEAERLL (203 aa)) are precorrin-2 dehydrogenase /sirohydrochlorin ferrochelatase. Residues 22–23 (EV) and 43–44 (PQ) each bind NAD(+). Serine 128 bears the Phosphoserine mark. The tract at residues 217–465 (GEVYLVGAGP…AWFEGAREDA (249 aa)) is uroporphyrinogen-III C-methyltransferase. Proline 226 contacts S-adenosyl-L-methionine. The active-site Proton acceptor is aspartate 249. Residue lysine 271 is the Proton donor of the active site. S-adenosyl-L-methionine is bound by residues 302 to 304 (GGD), isoleucine 307, 332 to 333 (TA), methionine 384, and glycine 413.

The protein in the N-terminal section; belongs to the precorrin-2 dehydrogenase / sirohydrochlorin ferrochelatase family. In the C-terminal section; belongs to the precorrin methyltransferase family.

The enzyme catalyses uroporphyrinogen III + 2 S-adenosyl-L-methionine = precorrin-2 + 2 S-adenosyl-L-homocysteine + H(+). It catalyses the reaction precorrin-2 + NAD(+) = sirohydrochlorin + NADH + 2 H(+). It carries out the reaction siroheme + 2 H(+) = sirohydrochlorin + Fe(2+). It participates in cofactor biosynthesis; adenosylcobalamin biosynthesis; precorrin-2 from uroporphyrinogen III: step 1/1. Its pathway is cofactor biosynthesis; adenosylcobalamin biosynthesis; sirohydrochlorin from precorrin-2: step 1/1. It functions in the pathway porphyrin-containing compound metabolism; siroheme biosynthesis; precorrin-2 from uroporphyrinogen III: step 1/1. The protein operates within porphyrin-containing compound metabolism; siroheme biosynthesis; siroheme from sirohydrochlorin: step 1/1. It participates in porphyrin-containing compound metabolism; siroheme biosynthesis; sirohydrochlorin from precorrin-2: step 1/1. Its function is as follows. Multifunctional enzyme that catalyzes the SAM-dependent methylations of uroporphyrinogen III at position C-2 and C-7 to form precorrin-2 via precorrin-1. Then it catalyzes the NAD-dependent ring dehydrogenation of precorrin-2 to yield sirohydrochlorin. Finally, it catalyzes the ferrochelation of sirohydrochlorin to yield siroheme. The sequence is that of Siroheme synthase from Pseudomonas aeruginosa (strain LESB58).